A 275-amino-acid polypeptide reads, in one-letter code: MALVKVKPTSAGRRGMVKVVSPNLHKGAPHAALLEKKTRGSGRNNNGHITIRHRGGGHKQHYRVVDFRRNKDGIPAKVERLEYDPNRTAHIALLCYADGERRYIIAPRGLEVGATLVSGIEAPIRAGNTLPIRNIPVGTTIHCIEMIPGKGAQMARSAGASAVLLAREGTYAQVRLRSGEVRRVHIECRATIGEVGNEEHSLRQIGKAGAMRWRGVRPTVRGVAMNPVDHPHGGGEGRTGEAREPVSPWGTPSKGFKTRRNKRTNNMIVQRRKRK.

Residues V223 to K275 are disordered. Basic and acidic residues predominate over residues D229–E244.

This sequence belongs to the universal ribosomal protein uL2 family. Part of the 50S ribosomal subunit. Forms a bridge to the 30S subunit in the 70S ribosome.

In terms of biological role, one of the primary rRNA binding proteins. Required for association of the 30S and 50S subunits to form the 70S ribosome, for tRNA binding and peptide bond formation. It has been suggested to have peptidyltransferase activity; this is somewhat controversial. Makes several contacts with the 16S rRNA in the 70S ribosome. This chain is Large ribosomal subunit protein uL2, found in Bordetella petrii (strain ATCC BAA-461 / DSM 12804 / CCUG 43448).